Reading from the N-terminus, the 279-residue chain is Zinc-finger homeodomain protein 1 (279 aa).

The segment covering 1–13 (MDFDDHDDGDEEM) has biased composition (acidic residues). Positions 1–47 (MDFDDHDDGDEEMPPMPVSSSYETPPQHGLAGGGMAPKPPGEIGSRV) are disordered. Residues 57–106 (YRECLKNHAVGIGGHAVDGCGEFMAAGEEGTIDALRCAACNCHRNFHRKE) form a ZF-HD dimerization-type; degenerate zinc finger. The tract at residues 168 to 190 (RPLALPSTSHSGRDDGDDLSGMV) is disordered. The segment at residues 215–278 (KKRFRTKFTQ…NNKHTLGKKL (64 aa)) is a DNA-binding region (homeobox).

Homo- and heterodimer with other ZFHD proteins.

Its subcellular location is the nucleus. Putative transcription factor. The protein is Zinc-finger homeodomain protein 1 (ZHD1) of Oryza sativa subsp. japonica (Rice).